The following is a 222-amino-acid chain: CCA-adding enzyme (222 aa).

Positions 50 and 53 each coordinate ATP. CTP contacts are provided by Ser50 and Lys53. Mg(2+) is bound by residues Asp61, Asp63, and Asp112. Residues His135, Lys155, and Tyr164 each contribute to the ATP site. CTP-binding residues include His135, Lys155, and Tyr164.

The protein belongs to the tRNA nucleotidyltransferase/poly(A) polymerase family. Archaeal CCA-adding enzyme subfamily. In terms of assembly, homodimer. The cofactor is Mg(2+).

The enzyme catalyses a tRNA precursor + 2 CTP + ATP = a tRNA with a 3' CCA end + 3 diphosphate. The catalysed reaction is a tRNA with a 3' CCA end + 2 CTP + ATP = a tRNA with a 3' CCACCA end + 3 diphosphate. Catalyzes the addition and repair of the essential 3'-terminal CCA sequence in tRNAs without using a nucleic acid template. Adds these three nucleotides in the order of C, C, and A to the tRNA nucleotide-73, using CTP and ATP as substrates and producing inorganic pyrophosphate. tRNA 3'-terminal CCA addition is required both for tRNA processing and repair. Also involved in tRNA surveillance by mediating tandem CCA addition to generate a CCACCA at the 3' terminus of unstable tRNAs. While stable tRNAs receive only 3'-terminal CCA, unstable tRNAs are marked with CCACCA and rapidly degraded. This chain is CCA-adding enzyme, found in Thermoplasma acidophilum.